Consider the following 355-residue polypeptide: N6-Methyl-AMP deaminase (355 aa).

Residues His-24 and His-26 each coordinate Zn(2+). N(6)-methyl-AMP contacts are provided by residues His-26, Asn-28, His-74, Ser-106–Arg-109, Asp-148, and Gly-181. Zn(2+) is bound at residue His-208. The N(6)-methyl-AMP site is built by Glu-211, Asp-293, and Asp-294. Catalysis depends on Glu-211, which acts as the Proton donor. Zn(2+) is bound at residue Asp-293.

This sequence belongs to the metallo-dependent hydrolases superfamily. Adenosine and AMP deaminases family. Monomer. The cofactor is Zn(2+).

The catalysed reaction is N(6)-methyl-AMP + H2O + H(+) = IMP + methylamine. Catalyzes the hydrolysis of the free cytosolic methylated adenosine nucleotide N(6)-methyl-AMP (N6-mAMP) to produce inositol monophosphate (IMP) and methylamine. Is required for the catabolism of cytosolic N6-mAMP, which is derived from the degradation of mRNA containing N6-methylated adenine (m6A). Catalyzes the removal of different alkyl groups not only from N6-substituted purine or 2-aminopurine nucleoside monophosphates but also from O6-substituted compounds in vitro. This is N6-Methyl-AMP deaminase from Homo sapiens (Human).